Reading from the N-terminus, the 362-residue chain is MSKNIVVLPGDHVGKEVTDEAIKVLNAIAEVRPEIKFNFQHHLIGGAAIDATGTPLPDEALEASKKADAVLLGAVGGPKWGTGAVRPEQGLLKIRKELGLYANLRPCNFASDSLLDLSPLKPEYAKGTDFVVVRELVGGIYFGERKEDEGDGVAWDSEKYSVPEVQRITRMAAFLALQQNPPLPIWSLDKANVLASSRLWRKTVEETIKTEFPQLTVQHQLIDSAAMILVKSPTKLNGVVITNNMFGDIISDEASVIPGSLGLLPSASLASLPDTNKAFGLYEPCHGSAPDLPANKVNPIATILSAAMMLKLSLDLVEEGRALEEAVRNVLDAGVRTGDLGGSNSTTEVGDAIAKAVKEILA.

Gly77 to Glu88 contributes to the NAD(+) binding site. Residues Arg95, Arg105, Arg134, and Asp223 each contribute to the substrate site. Mg(2+) contacts are provided by Asp223, Asp248, and Asp252. Position 287–298 (Gly287–Asn298) interacts with NAD(+).

It belongs to the isocitrate and isopropylmalate dehydrogenases family. In terms of assembly, homodimer. The cofactor is Mg(2+). Mn(2+) serves as cofactor.

It localises to the cytoplasm. It carries out the reaction (2R,3S)-3-isopropylmalate + NAD(+) = 4-methyl-2-oxopentanoate + CO2 + NADH. It functions in the pathway amino-acid biosynthesis; L-leucine biosynthesis; L-leucine from 3-methyl-2-oxobutanoate: step 3/4. In terms of biological role, catalyzes the oxidation of 3-carboxy-2-hydroxy-4-methylpentanoate (3-isopropylmalate) to 3-carboxy-4-methyl-2-oxopentanoate. The product decarboxylates to 4-methyl-2 oxopentanoate. The chain is 3-isopropylmalate dehydrogenase (LEU2) from Kluyveromyces lactis (strain ATCC 8585 / CBS 2359 / DSM 70799 / NBRC 1267 / NRRL Y-1140 / WM37) (Yeast).